The sequence spans 393 residues: Short-chain dehydrogenase/reductase family 42E member 1 (393 aa).

Tyrosine 152 acts as the Proton acceptor in catalysis. Lysine 156 serves as a coordination point for NAD(+). 2 helical membrane passes run 282–302 and 371–391; these read LPLT…FILG and GLVI…SVIL.

The protein belongs to the 3-beta-HSD family.

Its subcellular location is the membrane. This Bos taurus (Bovine) protein is Short-chain dehydrogenase/reductase family 42E member 1 (SDR42E1).